Consider the following 158-residue polypeptide: UPF0758 protein YkfG (158 aa).

An MPN domain is found at 36 to 158; that stretch reads AFTSTHAVRE…IYSFAEHGLL (123 aa). The Zn(2+) site is built by H107, H109, and D120. A JAMM motif motif is present at residues 107 to 120; sequence HNHPSGETTPSQAD.

Belongs to the UPF0758 family.

This chain is UPF0758 protein YkfG (ykfG), found in Escherichia coli (strain K12).